The following is a 104-amino-acid chain: Nucleoid-associated protein Bsph_0039 (104 aa).

The segment covering 1–12 (MRGMGNMQGMMK) has biased composition (low complexity). A disordered region spans residues 1 to 22 (MRGMGNMQGMMKKMQKMQKEMM).

The protein belongs to the YbaB/EbfC family. In terms of assembly, homodimer.

The protein resides in the cytoplasm. It localises to the nucleoid. In terms of biological role, binds to DNA and alters its conformation. May be involved in regulation of gene expression, nucleoid organization and DNA protection. The protein is Nucleoid-associated protein Bsph_0039 of Lysinibacillus sphaericus (strain C3-41).